The chain runs to 122 residues: Atrial gland peptide B (122 aa).

The signal sequence occupies residues 1–21 (MKANTMFIILCLTLSTLCVSS). Residues 22–34 (QFTSVLGKIFVTN) constitute a propeptide that is removed on maturation. Isoleucine 69 bears the Isoleucine amide mark. Residues 73–122 (AAGGMEQSEGQNPETKSHSWRERSVLTPSLLSLGESLESGISKRISINQD) constitute a propeptide that is removed on maturation. Residues 74-95 (AGGMEQSEGQNPETKSHSWRER) are disordered.

This sequence belongs to the molluscan ELH family.

It localises to the secreted. In terms of biological role, the atrial gland peptide A and peptide B precursors are the source of the 2 peptides that, upon release from this reproductive system gland, initiate the egg-laying process by exciting the bag cell neurons. These neurons, clustered in neural connectives near the abdominal ganglion, in turn release other peptides that act directly on the ganglion and also, via the circulating hemolymph, on many other organs to control the physiological processes of egg-laying. One of these other peptides is the egg-laying hormone. The sequence is that of Atrial gland peptide B from Aplysia californica (California sea hare).